Reading from the N-terminus, the 873-residue chain is Bifunctional heparan sulfate N-deacetylase/N-sulfotransferase 3 (873 aa).

The Cytoplasmic segment spans residues 1–13 (MSFIMKLHRHFQR). Residues 14–34 (TVILLATFCMVSIIISAYYLY) form a helical; Signal-anchor for type II membrane protein membrane-spanning segment. Topologically, residues 35 to 873 (SGYKQENELS…WLRQELQKVR (839 aa)) are lumenal. The segment at 36-589 (GYKQENELSE…KRHRDIWSKE (554 aa)) is heparan sulfate N-deacetylase 3. 4 N-linked (GlcNAc...) asparagine glycosylation sites follow: Asn-146, Asn-226, Asn-342, and Asn-392. Residues 590-873 (KTCDRLPKFL…WLRQELQKVR (284 aa)) form a heparan sulfate N-sulfotransferase 3 region. Lys-605 functions as the For sulfotransferase activity in the catalytic mechanism. Position 605–609 (605–609 (KTGTT)) interacts with 3'-phosphoadenylyl sulfate. N-linked (GlcNAc...) asparagine glycosylation is present at Asn-658. Residue Ser-703 participates in 3'-phosphoadenylyl sulfate binding. N-linked (GlcNAc...) asparagine glycosylation occurs at Asn-794. The cysteines at positions 809 and 819 are disulfide-linked. 3'-phosphoadenylyl sulfate is bound at residue 824–828 (KGRKY).

The protein belongs to the sulfotransferase 1 family. NDST subfamily. Monomer. In terms of tissue distribution, expressed in brain, kidney, liver, fetal and adult lung, adult pancreas, placenta, fetal spleen and fetal thymus. Not detected in adult/ fetal heart and skeletal muscle.

Its subcellular location is the golgi apparatus membrane. The catalysed reaction is alpha-D-glucosaminyl-[heparan sulfate](n) + 3'-phosphoadenylyl sulfate = N-sulfo-alpha-D-glucosaminyl-[heparan sulfate](n) + adenosine 3',5'-bisphosphate + 2 H(+). It participates in glycan metabolism; heparan sulfate biosynthesis. The protein operates within glycan metabolism; heparin biosynthesis. Its function is as follows. Essential bifunctional enzyme that catalyzes both the N-deacetylation and the N-sulfation of glucosamine (GlcNAc) of the glycosaminoglycan in heparan sulfate. Modifies the GlcNAc-GlcA disaccharide repeating sugar backbone to make N-sulfated heparosan, a prerequisite substrate for later modifications in heparin biosynthesis. Has high deacetylase activity but low sulfotransferase activity. This is Bifunctional heparan sulfate N-deacetylase/N-sulfotransferase 3 from Homo sapiens (Human).